A 227-amino-acid chain; its full sequence is Phosphatidylserine decarboxylase proenzyme (227 aa).

Catalysis depends on Ser184, which acts as the Schiff-base intermediate with substrate; via pyruvic acid. Ser184 is modified (pyruvic acid (Ser); by autocatalysis).

Belongs to the phosphatidylserine decarboxylase family. PSD-A subfamily. As to quaternary structure, heterodimer of a large membrane-associated beta subunit and a small pyruvoyl-containing alpha subunit. Requires pyruvate as cofactor. Is synthesized initially as an inactive proenzyme. Formation of the active enzyme involves a self-maturation process in which the active site pyruvoyl group is generated from an internal serine residue via an autocatalytic post-translational modification. Two non-identical subunits are generated from the proenzyme in this reaction, and the pyruvate is formed at the N-terminus of the alpha chain, which is derived from the carboxyl end of the proenzyme. The post-translation cleavage follows an unusual pathway, termed non-hydrolytic serinolysis, in which the side chain hydroxyl group of the serine supplies its oxygen atom to form the C-terminus of the beta chain, while the remainder of the serine residue undergoes an oxidative deamination to produce ammonia and the pyruvoyl prosthetic group on the alpha chain.

It is found in the cell membrane. The catalysed reaction is a 1,2-diacyl-sn-glycero-3-phospho-L-serine + H(+) = a 1,2-diacyl-sn-glycero-3-phosphoethanolamine + CO2. It participates in phospholipid metabolism; phosphatidylethanolamine biosynthesis; phosphatidylethanolamine from CDP-diacylglycerol: step 2/2. Its function is as follows. Catalyzes the formation of phosphatidylethanolamine (PtdEtn) from phosphatidylserine (PtdSer). This Ehrlichia ruminantium (strain Gardel) protein is Phosphatidylserine decarboxylase proenzyme.